We begin with the raw amino-acid sequence, 187 residues long: Calcium and integrin-binding family member 2 (187 aa).

EF-hand domains are found at residues 66–101 (RENPFKERIVEAFSEDGEGNLTFNDFVDMFSVLCES), 103–138 (PRELKANYAFKIYDFNTDNFICKEDLEMTLARLTKS), and 144–179 (EVVLVCDKVIEEADLDGDGKLGFADFEDMIAKAPDF). Ca(2+) contacts are provided by aspartate 116, asparagine 118, aspartate 120, aspartate 127, aspartate 157, aspartate 159, aspartate 161, lysine 163, and aspartate 168.

As to quaternary structure, monomer. Homodimer. Interacts with WHRN and MYO7A. Interacts with ITGA2B (via C-terminus cytoplasmic tail region); this interaction is stabilized/increased in a calcium and magnesium-dependent manner. Interacts with ITGA7 (via C-terminus cytoplasmic tail region); this interaction is stabilized/increased in a calcium and magnesium-dependent manner. Interacts with TMC1. Interacts with TMC2. Interacts with PIEZO1. Expressed in inner and outer segments of photoreceptor cells, as well as in the pigmented epithelium. Also observed in the inner and outer plexiform layers and in the ganglion cell layer (at protein level). Expressed in sensory hair cell stereocilia, with expression mainly at the basal body of the kinocilium and in the hair bundle stereocilia; and the apical surface of hair cells (at protein level). Located in the tip region of the stereocilia and at the apical surface of hair cells around the cuticular plate (at protein level). Not expressed in the hair bundles of the vestibular hair cells. Strongly expressed in skeletal muscles, brain, kidney and liver. Expressed in the skeletal muscle, retina and cochlea. Expressed in megakaryocytes and endothelial cells. Expressed in heart, spleen, lung, and inner ear. In the inner ear, expressed in the vestibule, basilar membrane and spiral ganglion cells. Expressed in the supporting cells in both the organ of Corti and the vestibular sensory epithelia.

The protein resides in the cytoplasm. Its subcellular location is the cell projection. The protein localises to the stereocilium. It localises to the photoreceptor inner segment. It is found in the cilium. The protein resides in the photoreceptor outer segment. Its subcellular location is the cell membrane. The protein localises to the sarcolemma. Its function is as follows. Calcium- and integrin-binding protein that plays a role in intracellular calcium homeostasis. Acts as an auxiliary subunit of the sensory mechanoelectrical transduction (MET) channel in hair cells. Essential for mechanoelectrical transduction (MET) currents in auditory hair cells and thereby required for hearing. Regulates the function of hair cell mechanotransduction by controlling the distribution of transmembrane channel-like proteins TMC1 and TMC2, and by regulating the function of the MET channels in hair cells. Required for the maintenance of auditory hair cell stereocilia bundle morphology and function and for hair-cell survival in the cochlea. Critical for proper photoreceptor cell maintenance and function. Plays a role in intracellular calcium homeostasis by decreasing ATP-induced calcium release. Seems to be dispensable for vestibular functions. This chain is Calcium and integrin-binding family member 2 (Cib2), found in Mus musculus (Mouse).